Consider the following 221-residue polypeptide: tRNA (guanine-N(7)-)-methyltransferase (221 aa).

The S-adenosyl-L-methionine site is built by E43, E68, and D123. D123 is a catalytic residue. Substrate-binding positions include K127, D159, and 199–202; that span reads TEYE.

The protein belongs to the class I-like SAM-binding methyltransferase superfamily. TrmB family.

The enzyme catalyses guanosine(46) in tRNA + S-adenosyl-L-methionine = N(7)-methylguanosine(46) in tRNA + S-adenosyl-L-homocysteine. Its pathway is tRNA modification; N(7)-methylguanine-tRNA biosynthesis. Catalyzes the formation of N(7)-methylguanine at position 46 (m7G46) in tRNA. This chain is tRNA (guanine-N(7)-)-methyltransferase, found in Mycoplasma mycoides subsp. mycoides SC (strain CCUG 32753 / NCTC 10114 / PG1).